Consider the following 245-residue polypeptide: 1-(5-phosphoribosyl)-5-[(5-phosphoribosylamino)methylideneamino] imidazole-4-carboxamide isomerase (245 aa).

Residue Asp-7 is the Proton acceptor of the active site. Asp-129 (proton donor) is an active-site residue.

Belongs to the HisA/HisF family.

Its subcellular location is the cytoplasm. It carries out the reaction 1-(5-phospho-beta-D-ribosyl)-5-[(5-phospho-beta-D-ribosylamino)methylideneamino]imidazole-4-carboxamide = 5-[(5-phospho-1-deoxy-D-ribulos-1-ylimino)methylamino]-1-(5-phospho-beta-D-ribosyl)imidazole-4-carboxamide. The protein operates within amino-acid biosynthesis; L-histidine biosynthesis; L-histidine from 5-phospho-alpha-D-ribose 1-diphosphate: step 4/9. This chain is 1-(5-phosphoribosyl)-5-[(5-phosphoribosylamino)methylideneamino] imidazole-4-carboxamide isomerase, found in Serratia proteamaculans (strain 568).